Consider the following 238-residue polypeptide: Ribonuclease PH (238 aa).

Phosphate contacts are provided by residues arginine 86 and 124–126 (GTR).

Belongs to the RNase PH family. As to quaternary structure, homohexameric ring arranged as a trimer of dimers.

It carries out the reaction tRNA(n+1) + phosphate = tRNA(n) + a ribonucleoside 5'-diphosphate. In terms of biological role, phosphorolytic 3'-5' exoribonuclease that plays an important role in tRNA 3'-end maturation. Removes nucleotide residues following the 3'-CCA terminus of tRNAs; can also add nucleotides to the ends of RNA molecules by using nucleoside diphosphates as substrates, but this may not be physiologically important. Probably plays a role in initiation of 16S rRNA degradation (leading to ribosome degradation) during starvation. This is Ribonuclease PH from Photobacterium profundum (strain SS9).